Consider the following 785-residue polypeptide: Peptide transporter family 2 (785 aa).

9 helical membrane passes run 46–66 (FSFY…LNFS), 72–92 (VLFH…SILA), 99–119 (FWTI…LAFS), 134–154 (LLGL…VSAF), 167–187 (ISLF…ISMW), 208–228 (FGIP…GSFW), 303–323 (VIVM…QGST), 345–365 (MGVL…SIVY), and 382–402 (AGGG…QLFV). The N-linked (GlcNAc...) asparagine glycan is linked to N467. Transmembrane regions (helical) follow at residues 670-690 (ILWQ…FSIT), 711-731 (WLFT…LNIF), and 738-758 (MFVF…LAVF).

It belongs to the major facilitator superfamily. Proton-dependent oligopeptide transporter (POT/PTR) (TC 2.A.17) family. As to expression, expressed in vulval, pharyngeal and anal muscles.

Its subcellular location is the membrane. In terms of biological role, proton-dependent uptake of di- or tripeptides, and to a minor extent tetrapeptides. Transport is independent of sodium and chloride ions. Protein shows high affinity to peptide substrates. This is Peptide transporter family 2 (pept-2) from Caenorhabditis elegans.